A 358-amino-acid chain; its full sequence is Chorismate synthase (358 aa).

Position 47 (R47) interacts with NADP(+). Residues 124 to 126 (RSS), 240 to 241 (NA), G284, 299 to 303 (KPIAT), and R325 each bind FMN.

The protein belongs to the chorismate synthase family. As to quaternary structure, homotetramer. Requires FMNH2 as cofactor.

The enzyme catalyses 5-O-(1-carboxyvinyl)-3-phosphoshikimate = chorismate + phosphate. The protein operates within metabolic intermediate biosynthesis; chorismate biosynthesis; chorismate from D-erythrose 4-phosphate and phosphoenolpyruvate: step 7/7. Functionally, catalyzes the anti-1,4-elimination of the C-3 phosphate and the C-6 proR hydrogen from 5-enolpyruvylshikimate-3-phosphate (EPSP) to yield chorismate, which is the branch point compound that serves as the starting substrate for the three terminal pathways of aromatic amino acid biosynthesis. This reaction introduces a second double bond into the aromatic ring system. The polypeptide is Chorismate synthase (Bacteroides thetaiotaomicron (strain ATCC 29148 / DSM 2079 / JCM 5827 / CCUG 10774 / NCTC 10582 / VPI-5482 / E50)).